We begin with the raw amino-acid sequence, 237 residues long: uncharacterized protein (237 aa).

The signal sequence occupies residues 1 to 28 (MNRPLLSVAGSLFVAAWALYIFSCFQHG). The interval 52–96 (NARDTAAHPSDTADNTSGSSTTTDPRSHGNAPPAPVGGAAQTHTQ) is disordered. Positions 63 to 75 (TADNTSGSSTTTD) are enriched in polar residues.

This is an uncharacterized protein from Treponema pallidum (strain Nichols).